A 484-amino-acid chain; its full sequence is Signal transduction histidine-protein kinase/phosphatase MprB (484 aa).

Positions 1 to 10 are enriched in low complexity; it reads MAADNAGRWP. The disordered stretch occupies residues 1–23; that stretch reads MAADNAGRWPGQPPGPPAPTHPA. At 1-31 the chain is on the cytoplasmic side; the sequence is MAADNAGRWPGQPPGPPAPTHPASSVSLRWR. The span at 11 to 20 shows a compositional bias: pro residues; that stretch reads GQPPGPPAPT. Residues 32 to 52 traverse the membrane as a helical segment; sequence VMLLAMSMVVISVVLMAVAVF. Topologically, residues 53–172 are extracellular; that stretch reads AVTSRALYDD…TGKVLKRLGT (120 aa). A helical transmembrane segment spans residues 173 to 193; it reads VLLIVGGLGVAVAAIAGGMVA. The HAMP domain occupies 194–246; it reads SAGLRPVGRLTQAAERVARTDDLRPIPVIGNDELARLTETFNMMLRALAESRE. Residues 194 to 484 lie on the Cytoplasmic side of the membrane; sequence SAGLRPVGRL…SPAGSDEAER (291 aa). The 221-residue stretch at 254-474 folds into the Histidine kinase domain; the sequence is DAGHELRTPL…AMHVVLPGRP (221 aa). Phosphohistidine; by autocatalysis is present on H257.

The cofactor is Mg(2+). It depends on Mn(2+) as a cofactor. Post-translationally, autophosphorylated.

It localises to the cell membrane. It carries out the reaction ATP + protein L-histidine = ADP + protein N-phospho-L-histidine.. In terms of biological role, member of the two-component regulatory system MprB/MprA which contributes to maintaining a balance among several systems involved in stress resistance and is required for establishment and maintenance of persistent infection in the host. In response to environmental signals MprB acts both as a membrane-associated protein kinase that undergoes autophosphorylation and subsequently transfers the phosphate to MprA, and a protein phosphatase that dephosphorylates phospho-MprA. The sequence is that of Signal transduction histidine-protein kinase/phosphatase MprB (mprB) from Mycolicibacterium vanbaalenii (strain DSM 7251 / JCM 13017 / BCRC 16820 / KCTC 9966 / NRRL B-24157 / PYR-1) (Mycobacterium vanbaalenii).